Consider the following 325-residue polypeptide: BES1/BZR1 homolog protein 4 (325 aa).

The disordered stretch occupies residues 1 to 21 (MTSGTRMPTWRERENNKRRER). Residues 6-89 (RMPTWREREN…RMEIGGGSAT (84 aa)) are required for DNA-binding. A Phosphothreonine modification is found at threonine 169. The interval 304–325 (ERIHEESGSDDLELTLGNSSTR) is disordered.

Belongs to the BZR/LAT61 family. In terms of processing, phosphorylated. Phosphorylation increases protein degradation.

This is BES1/BZR1 homolog protein 4 (BEH4) from Arabidopsis thaliana (Mouse-ear cress).